The sequence spans 699 residues: Polyribonucleotide nucleotidyltransferase (699 aa).

Positions 485 and 491 each coordinate Mg(2+). A KH domain is found at 552–611; sequence PRITTIKINPEKIRDVIGKGGAVIRALTEETGTTIELEDDGTVKIASSNGDATREAIRRI. Residues 621-689 enclose the S1 motif domain; the sequence is GRIYNGKVIR…RQGRVRLSIK (69 aa).

This sequence belongs to the polyribonucleotide nucleotidyltransferase family. Component of the RNA degradosome, which is a multiprotein complex involved in RNA processing and mRNA degradation. It depends on Mg(2+) as a cofactor.

Its subcellular location is the cytoplasm. It catalyses the reaction RNA(n+1) + phosphate = RNA(n) + a ribonucleoside 5'-diphosphate. Its function is as follows. Involved in mRNA degradation. Catalyzes the phosphorolysis of single-stranded polyribonucleotides processively in the 3'- to 5'-direction. The protein is Polyribonucleotide nucleotidyltransferase of Shewanella sp. (strain ANA-3).